The following is a 475-amino-acid chain: Maintenance of mitochondrial morphology protein 1 (475 aa).

At 1–14 (MSETFSPNLTFTEG) the chain is on the lumenal side. A helical transmembrane segment spans residues 15–35 (FVLGQASFLIILLLFIRYVVF). The Cytoplasmic segment spans residues 36–475 (SPSEQIDHEG…VTPGQVGTSR (440 aa)). One can recognise an SMP-LTD domain in the interval 80–278 (PAESSDWVNV…HPNHISLALP (199 aa)). 2 disordered regions span residues 321–381 (NPVE…GQPQ) and 394–475 (SYPH…GTSR). The segment covering 341 to 351 (PPTPLVQPPGT) has biased composition (pro residues). 2 stretches are compositionally biased toward polar residues: residues 353–380 (PTLS…QGQP) and 394–403 (SYPHYNTYTL). The segment covering 442–464 (STTSSLTPSQSQSQFRFRGQFAS) has biased composition (low complexity).

It belongs to the MMM1 family. Homodimer. Component of the ER-mitochondria encounter structure (ERMES) or MDM complex, composed of MMM1, MDM10, MDM12 and MDM34. An MMM1 homodimer associates with one molecule of MDM12 on each side in a pairwise head-to-tail manner, and the SMP-LTD domains of MMM1 and MDM12 generate a continuous hydrophobic tunnel for phospholipid trafficking.

It is found in the endoplasmic reticulum membrane. In terms of biological role, component of the ERMES/MDM complex, which serves as a molecular tether to connect the endoplasmic reticulum (ER) and mitochondria. Components of this complex are involved in the control of mitochondrial shape and protein biogenesis, and function in nonvesicular lipid trafficking between the ER and mitochondria. The MDM12-MMM1 subcomplex functions in the major beta-barrel assembly pathway that is responsible for biogenesis of all outer membrane beta-barrel proteins, and acts in a late step after the SAM complex. The MDM10-MDM12-MMM1 subcomplex further acts in the TOM40-specific pathway after the action of the MDM12-MMM1 complex. Essential for establishing and maintaining the structure of mitochondria and maintenance of mtDNA nucleoids. This Cryptococcus neoformans var. neoformans serotype D (strain B-3501A) (Filobasidiella neoformans) protein is Maintenance of mitochondrial morphology protein 1.